The following is a 904-amino-acid chain: Toll-like receptor 3 (904 aa).

The N-terminal stretch at Met-1–Ala-26 is a signal peptide. An LRRNT domain is found at His-27–Thr-52. Over His-27–Leu-705 the chain is Lumenal. Cys-29 and Cys-38 are oxidised to a cystine. Asn-53, Asn-58, and Asn-71 each carry an N-linked (GlcNAc...) asparagine glycan. 6 LRR repeats span residues Asn-53–Arg-74, Arg-77–Asn-98, Trp-101–Phe-122, Asn-125–Asn-146, Asn-149–Gln-170, and Asn-173–Gly-196. A disulfide bond links Cys-96 and Cys-123. N-linked (GlcNAc...) asparagine glycosylation is present at Asn-125. The N-linked (GlcNAc...) asparagine glycan is linked to Asn-197. LRR repeat units lie at residues Ser-199–Ala-220 and Lys-223–Glu-245. N-linked (GlcNAc...) asparagine glycosylation is found at Asn-248, Asn-253, Asn-276, and Asn-292. 14 LRR repeats span residues Ser-250 to Gly-271, Asn-276 to Trp-297, His-300 to Gly-321, Asn-324 to Pro-345, Cys-357 to Gly-378, Arg-381 to Thr-401, Pro-409 to Trp-430, His-433 to Gly-455, Tyr-466 to Met-487, Asn-508 to Gly-529, Lys-532 to Gly-553, His-564 to Asp-585, Glu-588 to Asn-609, and Ser-612 to Pro-633. Residues Asn-399 and Asn-414 are each glycosylated (N-linked (GlcNAc...) asparagine). 3 N-linked (GlcNAc...) asparagine glycosylation sites follow: Asn-637, Asn-663, and Asn-668. One can recognise an LRRCT domain in the interval Asn-646–Asp-699. 2 disulfides stabilise this stretch: Cys-650–Cys-678 and Cys-652–Cys-697. The helical transmembrane segment at Leu-706–Phe-726 threads the bilayer. At Glu-727–His-904 the chain is on the cytoplasmic side. The TIR domain maps to Phe-754–Leu-897. Residue Tyr-759 is modified to Phosphotyrosine. Residues Lys-812 and Lys-831 each participate in a glycyl lysine isopeptide (Lys-Gly) (interchain with G-Cter in ubiquitin) cross-link. Tyr-858 bears the Phosphotyrosine mark.

The protein belongs to the Toll-like receptor family. In terms of assembly, monomer and homodimer; dimerization is triggered by ligand-binding and is required for TLR3 signaling. Interacts (via transmembrane domain) with UNC93B1. Interacts with TICAM1 (via the TIR domain) in response to poly(I:C) and this interaction is enhanced the presence of WDFY1. Interacts with SRC; upon binding of double-stranded RNA. The tyrosine-phosphorylated form (via TIR domain) interacts with WDFY1 (via WD repeat 2) in response to poly(I:C). In terms of processing, ubiquitinated by TRIM3; leading to recognition and sorting of polyubiquitinated TLR3 by the ESCRT complexes. Ubiquitinated by ZNRF1 via 'Lys-63'-linked ubiquitin chains; leading to TLR3 lysosomal trafficking and degradation.

Its subcellular location is the endoplasmic reticulum membrane. The protein localises to the endosome membrane. It is found in the early endosome. Functionally, key component of innate and adaptive immunity. TLRs (Toll-like receptors) control host immune response against pathogens through recognition of molecular patterns specific to microorganisms. TLR3 is a nucleotide-sensing TLR which is activated by double-stranded RNA, a sign of viral infection. Acts via the adapter TRIF/TICAM1, leading to NF-kappa-B activation, cytokine secretion and the inflammatory response. This Boselaphus tragocamelus (Nilgai) protein is Toll-like receptor 3 (TLR3).